The following is a 154-amino-acid chain: Small ribosomal subunit protein eS10 (154 aa).

The tract at residues 91 to 154 is disordered; the sequence is ATMKKQASRP…ERSAPAPQQN (64 aa). Residues 124–135 show a composition bias toward basic and acidic residues; sequence RGDRRQGGDRRG.

This sequence belongs to the eukaryotic ribosomal protein eS10 family.

It is found in the cytoplasm. This Dictyostelium discoideum (Social amoeba) protein is Small ribosomal subunit protein eS10 (rps10).